The chain runs to 45 residues: Large ribosomal subunit protein bL34 (45 aa).

The disordered stretch occupies residues 1–27; the sequence is MTKRTLGGTSRKRKRVSGFRVRMRTHT. Positions 10–27 are enriched in basic residues; sequence SRKRKRVSGFRVRMRTHT.

Belongs to the bacterial ribosomal protein bL34 family.

The protein is Large ribosomal subunit protein bL34 of Prochlorococcus marinus (strain MIT 9211).